We begin with the raw amino-acid sequence, 240 residues long: Protein YIPF6 (240 aa).

At 1–91 (MVVSHLNRTV…PKKSSALLRD (91 aa)) the chain is on the cytoplasmic side. A helical transmembrane segment spans residues 92-112 (WDLWGPLLLCVTLALMLQGGS). The Lumenal segment spans residues 113–125 (ADSEEDGRPQFAE). A helical transmembrane segment spans residues 126–146 (VFVIIWFGSVIITLNSKLLGG). The Cytoplasmic segment spans residues 147–149 (TIS). Residues 150-170 (FFQSLCVLGYCILPLTVAMIV) form a helical membrane-spanning segment. Over 171 to 172 (CR) the chain is Lumenal. Residues 173 to 193 (IVLLGGSGVVSFAVRLIVVTA) form a helical membrane-spanning segment. The Cytoplasmic portion of the chain corresponds to 194–215 (SFSWSTFASTAFLADSQPTNRK). The chain crosses the membrane as a helical span at residues 216–236 (ALVVYPVFLFYFVIGWMILTF). The Lumenal portion of the chain corresponds to 237 to 240 (SPSH).

Belongs to the YIP1 family.

It is found in the golgi apparatus membrane. The polypeptide is Protein YIPF6 (yipf6) (Danio rerio (Zebrafish)).